We begin with the raw amino-acid sequence, 372 residues long: MAAERLDPWGAVEIKDYDRLLRTFGIRPFSEVLPLLRKAGMEPSFLMRRGIIFGHRDFDKILEAKARGERVAVLTGFMPSGKFHFGHKLTVDQLIYLQKNGFKVFVAIADAEAFAVRRIGREEAVRIAVEEYIANMIALGLDPKDTEFYFQTNRGTPYFRLIQLFSGKVTAAEMEAIYGELTPAKMMASLTQAADILHVQLDEYGGYRHVVVPVGADQDPHLRLTRDLADRMAGVVELERPASTYHKLQPGLDGRKMSSSRPDSTIFLTDPPEVARNKLFRALTGGRATAEEQRRLGGVPEVCSVYHMDLYHLMPDDGEVKHIYTSCRLGKILCGECKQIAWEKLERFLAEHQSRLEKAKTIAWKLVEPPRF.

A 'HIGH' region motif is present at residues 79–87; it reads PSGKFHFGH. The disordered stretch occupies residues 247 to 268; sequence KLQPGLDGRKMSSSRPDSTIFL. Positions 256–260 match the 'KMSKS' region motif; it reads KMSSS. Residues 257–267 are compositionally biased toward polar residues; sequence MSSSRPDSTIF.

The protein belongs to the class-I aminoacyl-tRNA synthetase family.

It localises to the cytoplasm. The catalysed reaction is tRNA(Trp) + L-tryptophan + ATP = L-tryptophyl-tRNA(Trp) + AMP + diphosphate + H(+). This Aeropyrum pernix (strain ATCC 700893 / DSM 11879 / JCM 9820 / NBRC 100138 / K1) protein is Tryptophan--tRNA ligase.